A 148-amino-acid chain; its full sequence is Probable calcium-binding protein CML14 (148 aa).

3 consecutive EF-hand domains span residues 9 to 44 (DQVS…LGGN), 80 to 115 (PFDR…IGEK), and 116 to 148 (LQPS…MVAK). 5 residues coordinate Ca(2+): Asp22, Asp24, Asp26, Lys28, and Glu33.

In terms of biological role, potential calcium sensor. This chain is Probable calcium-binding protein CML14 (CML14), found in Arabidopsis thaliana (Mouse-ear cress).